The primary structure comprises 56 residues: Large ribosomal subunit protein bL32 (56 aa).

The tract at residues 1-37 is disordered; it reads MAVQQNKPTRSKRGMRRSHDALTAPLLSVDKTSGETH.

Belongs to the bacterial ribosomal protein bL32 family.

The sequence is that of Large ribosomal subunit protein bL32 from Photorhabdus laumondii subsp. laumondii (strain DSM 15139 / CIP 105565 / TT01) (Photorhabdus luminescens subsp. laumondii).